The sequence spans 457 residues: MTKKVYVKTFGCQMNEYDSDKMVDVLNAAEGLEKTDTPEDADIILFNTCSVREKAQEKVFSDLGRVRELKEAKPGLLIGVGGCVASQEGASIVSRAPYVDLVFGPQTLHRLPQMIDARRASGRAQVDITFPEIEKFDHLPPARVEGPSAFVSIMEGCSKYCSYCVVPYTRGDEVSRPLDDVLTEVAGLADQGVREVTLLGQNVNAYRGALAAGSSEIADFATLIEYVADIPGIERIRYTTSHPKEFTQRLIDTYAKVPKLVNHLHLPVQHGSDRILMAMKRGYTVLEYKSVIRKLRAIRPDLSLSTDMIVGFPGETEDDFDKMMALVHEMGYDTSFSFIYSPRPGTPAANLADDTPRDVKLKRLQHLQATIEENVARISQSMVGKVERILVEGPSRKDPNELAGRTENNRVVNFPAPLASHPRLIGQMIDVKINHAYPHSLRGELVIVSDDASAATH.

The MTTase N-terminal domain occupies 3-120 (KKVYVKTFGC…LPQMIDARRA (118 aa)). The [4Fe-4S] cluster site is built by Cys-12, Cys-49, Cys-83, Cys-157, Cys-161, and Cys-164. The region spanning 143–377 (RVEGPSAFVS…QATIEENVAR (235 aa)) is the Radical SAM core domain. One can recognise a TRAM domain in the interval 380 to 447 (QSMVGKVERI…PHSLRGELVI (68 aa)).

It belongs to the methylthiotransferase family. MiaB subfamily. Monomer. Requires [4Fe-4S] cluster as cofactor.

It is found in the cytoplasm. It catalyses the reaction N(6)-dimethylallyladenosine(37) in tRNA + (sulfur carrier)-SH + AH2 + 2 S-adenosyl-L-methionine = 2-methylsulfanyl-N(6)-dimethylallyladenosine(37) in tRNA + (sulfur carrier)-H + 5'-deoxyadenosine + L-methionine + A + S-adenosyl-L-homocysteine + 2 H(+). Catalyzes the methylthiolation of N6-(dimethylallyl)adenosine (i(6)A), leading to the formation of 2-methylthio-N6-(dimethylallyl)adenosine (ms(2)i(6)A) at position 37 in tRNAs that read codons beginning with uridine. This is tRNA-2-methylthio-N(6)-dimethylallyladenosine synthase from Burkholderia cenocepacia (strain ATCC BAA-245 / DSM 16553 / LMG 16656 / NCTC 13227 / J2315 / CF5610) (Burkholderia cepacia (strain J2315)).